The sequence spans 706 residues: Zinc transporter foi (706 aa).

An N-terminal signal peptide occupies residues 1-21 (MARHIMAVCVVCLLCAHRLHC). The Extracellular segment spans residues 22–261 (QDHIESLLGP…EKDKDIFYVW (240 aa)). Residues 40-56 (QDQLNARVYTNLSPSSE) show a composition bias toward polar residues. Residues 40–101 (QDQLNARVYT…HGPTSESRVP (62 aa)) are disordered. 6 N-linked (GlcNAc...) asparagine glycosylation sites follow: N74, N119, N176, N182, N196, and N207. Residues 262 to 282 (IYAFISVFACGILGLVGVAII) traverse the membrane as a helical segment. Topologically, residues 283 to 292 (PFMGSRYYKY) are cytoplasmic. A helical transmembrane segment spans residues 293–313 (IIQYLVALAVGTMTGDALLHL). Over 314 to 329 (LPHSLAGQDERGMIMK) the chain is Extracellular. Residues 330 to 350 (GLGCLGGIIFFYVMEHALTMI) traverse the membrane as a helical segment. At 351–604 (SEWRKSVEKK…LIKAGMSVKS (254 aa)) the chain is on the cytoplasmic side. Phosphoserine is present on residues S376, S377, and S381. The chain crosses the membrane as a helical span at residues 605 to 625 (AVYYNLLTGVLSFIGMIFGIA). Topologically, residues 626–631 (FGQSQD) are extracellular. A helical membrane pass occupies residues 632–652 (VAQWMFAVAAGLFIYIALVDM). The Cytoplasmic portion of the chain corresponds to 653-665 (MPEISASHKSLGQ). Residues 666 to 686 (FLLQILGMLSGVGIMLLIALY) traverse the membrane as a helical segment. At 687 to 706 (EGDLMSAFGTAGAASHQHAH) the chain is on the extracellular side.

This sequence belongs to the ZIP transporter (TC 2.A.5) family. Post-translationally, glycosylated. Maternal foi has almost completely disappeared by embryonic stage 3 except in the pole cells. In stage 6 embryos, expression is enriched in the invaginating mesoderm. In stage 9 embryos, high levels in the anterior and posterior midgut primordia. In stage 14 embryos, broad expression with low levels in the epidermis.

It localises to the cell membrane. In terms of biological role, required for the normal migration of longitudinal and peripheral glial cells. During larval development, required for the migration of the subretinal glia into the eye disk. During embryonic development, also controls the migration of muscle cells toward their attachment sites. Required in the mesoderm for the correct morphogenesis of embryonic gonad and for tracheal branch fusion during tracheal development. Shg may be cooperating with foi to mediate a common mechanism for gonad and tracheal morphogenesis. Acts as a zinc transporter in both yeast and mammalian cells. The polypeptide is Zinc transporter foi (Drosophila melanogaster (Fruit fly)).